The following is a 1533-amino-acid chain: Maternal protein pumilio (1533 aa).

Disordered stretches follow at residues 102 to 149, 207 to 276, 304 to 331, and 382 to 452; these read ACGD…TIGM, AAAV…QQHP, YDHH…PGAG, and WEKS…AGIL. Positions 103–117 are enriched in basic and acidic residues; that stretch reads CGDDGHGIDNPDKWK. Over residues 133–149 the composition is skewed to gly residues; it reads PGNGSNGGPGAIGTIGM. Over residues 207-237 the composition is skewed to low complexity; it reads AAAVAAQQQHQHPHQQHPQQQQQQQQAQNQG. Residues 243–255 are compositionally biased toward gly residues; sequence MGGGNGLGNGNGL. Low complexity predominate over residues 256-276; the sequence is GIQHPGQQQQQQQQQQQQQHP. Residues Ser453, Ser468, Ser470, and Ser477 each carry the phosphoserine modification. Polar residues predominate over residues 470–479; the sequence is SPTNKDSSLS. Disordered regions lie at residues 470 to 558, 697 to 725, 846 to 912, and 975 to 1008; these read SPTN…NLLF, VGAP…QQQQ, VLVP…AFSP, and LGAP…QQQQ. The segment covering 483-503 has biased composition (basic and acidic residues); sequence PHLRNLKFDDNDKSRDDKEKA. Residue Ser505 is modified to Phosphoserine. Positions 863-875 are enriched in low complexity; that stretch reads PQLYQPQPQTAQQ. In terms of domain architecture, PUM-HD spans 1091–1428; the sequence is GRSRLLEDFR…HINAKLEKYY (338 aa). Pumilio repeat units lie at residues 1111–1146, 1147–1182, 1183–1218, 1219–1254, 1255–1290, 1291–1326, 1327–1362, and 1366–1402; these read DLAN…MVFS, EILA…TLGM, QVKG…EIVH, ELDG…FIIN, AFKG…PILD, ELHE…ILIN, SVRG…GLID, and TFND…KLMT. The segment at 1126–1130 is adenine-nucleotide binding in RNA target; that stretch reads SRFIQ. Residues 1162–1166 form a uracil-nucleotide binding in RNA target region; the sequence is NYVIQ. Residues 1198–1202 are adenine-nucleotide binding in RNA target; the sequence is CRVIQ. Residues 1234–1238 form a non-specific-nucleotide binding in RNA target region; it reads NHVVQ. The tract at residues 1270-1274 is adenine-nucleotide binding in RNA target; sequence CRVIQ. A uracil-nucleotide binding in RNA target region spans residues 1306-1310; it reads NYVIQ. The interval 1342–1346 is guanine-nucleotide binding in RNA target; sequence SNVVE. Residues 1382–1386 form a uracil-nucleotide binding in RNA target region; that stretch reads NYVVQ. The interval 1494–1533 is disordered; the sequence is AMVVEPSSPDASESSSSVVSGAVNSSLGPIGPPTNGNVVL. Positions 1496–1519 are enriched in low complexity; it reads VVEPSSPDASESSSSVVSGAVNSS.

In terms of assembly, interacts with nanos (nos) and brat. Acts via the formation of a quaternary complex composed of pum, nanos, brat and the 3'-UTR mRNA of hb.

It localises to the cytoplasm. The protein resides in the cytoplasmic ribonucleoprotein granule. Functionally, sequence-specific RNA-binding protein that acts as a post-transcriptional repressor by binding the 3'-UTR of mRNA targets. Binds to an RNA consensus sequence, the Pumilio Response Element (PRE), 5'-UGUANAUA-3', that is related to the Nanos Response Element (NRE). Mediates post-transcriptional repression of transcripts via different mechanisms: acts via direct recruitment of deadenylase complexes leading to translational inhibition and mRNA degradation. Also mediates deadenylation-independent repression by promoting accessibility of miRNAs. Mediates post-transcriptional silencing of E2f mRNA by binding to its 3'-UTR and promoting miRNA regulation. Required for abdominal development and to support proliferation and self-renewal of germ cells. Pum is the only gene required for nanos (nos) activity that is not also required for posterior localization of germline determinants. Pum is required during embryogenesis when nanos activity apparently moves anteriorly from the posterior pole. This Drosophila melanogaster (Fruit fly) protein is Maternal protein pumilio (pum).